Consider the following 553-residue polypeptide: Peroxiredoxin-2A (553 aa).

Residues 4-160 (IDVGDFVPDG…LMKMTTTTMS (157 aa)) enclose the Thioredoxin domain. Cys-51 (cysteine sulfenic acid (-SOH) intermediate) is an active-site residue. Residues 156 to 201 (TTTMSNLPTDLLEEIISRVPRKYMRAVRLTCKRWNGMFKSQSFTKM) form the F-box domain.

It belongs to the peroxiredoxin family. Prx5 subfamily. As to quaternary structure, monomer.

It carries out the reaction [glutaredoxin]-dithiol + a hydroperoxide = [glutaredoxin]-disulfide + an alcohol + H2O. Functionally, thiol-specific peroxidase that catalyzes the reduction of hydrogen peroxide and organic hydroperoxides to water and alcohols, respectively. Plays a role in cell protection against oxidative stress by detoxifying peroxides. May be involved in intracellular redox signaling. This chain is Peroxiredoxin-2A (PRXIIA), found in Arabidopsis thaliana (Mouse-ear cress).